We begin with the raw amino-acid sequence, 179 residues long: Large ribosomal subunit protein uL6 (179 aa).

The protein belongs to the universal ribosomal protein uL6 family. As to quaternary structure, part of the 50S ribosomal subunit.

This protein binds to the 23S rRNA, and is important in its secondary structure. It is located near the subunit interface in the base of the L7/L12 stalk, and near the tRNA binding site of the peptidyltransferase center. This chain is Large ribosomal subunit protein uL6, found in Beutenbergia cavernae (strain ATCC BAA-8 / DSM 12333 / CCUG 43141 / JCM 11478 / NBRC 16432 / NCIMB 13614 / HKI 0122).